We begin with the raw amino-acid sequence, 685 residues long: Beta-taxilin (685 aa).

The tract at residues 1 to 135 is disordered; sequence MEINHPDQLS…KEPVSNKEQK (135 aa). Residues 18-28 show a composition bias toward polar residues; sequence GDSSSLNQNGP. 2 stretches are compositionally biased toward basic and acidic residues: residues 47–67 and 80–90; these read GSLH…RQLE and RGKESTSETKE. The segment covering 98–113 has biased composition (acidic residues); that stretch reads PDNEDVDYEETTEEID. Coiled-coil stretches lie at residues 138 to 354 and 381 to 470; these read KKIL…VLKE and NEVF…SEKE. Residues 465-478 are compositionally biased toward basic and acidic residues; the sequence is KMSEKEDQVQRTSE. 2 disordered regions span residues 465–497 and 517–685; these read KMSE…EEAN and EFTP…NGVD. Residues Ser-477, Ser-484, and Ser-486 each carry the phosphoserine modification. The span at 479 to 495 shows a compositional bias: acidic residues; that stretch reads EEPEPSVSENEEVDAEE. Over residues 575-591 the composition is skewed to low complexity; that stretch reads CEATPAPTASCTPAEAE. The span at 612-627 shows a compositional bias: polar residues; it reads ANTSGQAPLSPAQGSL.

Belongs to the taxilin family. Binds to the C-terminal coiled coil region of syntaxin family members STX1A, STX3A and STX4A. Has a preference for STX1A. In terms of tissue distribution, specifically expressed in skeletal muscle.

Functionally, promotes motor nerve regeneration. May be involved in intracellular vesicle traffic. This is Beta-taxilin (Txlnb) from Mus musculus (Mouse).